The following is a 158-amino-acid chain: NAD(P)H-quinone oxidoreductase subunit N (158 aa).

This sequence belongs to the complex I NdhN subunit family. As to quaternary structure, NDH-1 can be composed of about 15 different subunits; different subcomplexes with different compositions have been identified which probably have different functions.

The protein localises to the cellular thylakoid membrane. The enzyme catalyses a plastoquinone + NADH + (n+1) H(+)(in) = a plastoquinol + NAD(+) + n H(+)(out). The catalysed reaction is a plastoquinone + NADPH + (n+1) H(+)(in) = a plastoquinol + NADP(+) + n H(+)(out). NDH-1 shuttles electrons from an unknown electron donor, via FMN and iron-sulfur (Fe-S) centers, to quinones in the respiratory and/or the photosynthetic chain. The immediate electron acceptor for the enzyme in this species is believed to be plastoquinone. Couples the redox reaction to proton translocation, and thus conserves the redox energy in a proton gradient. Cyanobacterial NDH-1 also plays a role in inorganic carbon-concentration. The protein is NAD(P)H-quinone oxidoreductase subunit N of Nostoc punctiforme (strain ATCC 29133 / PCC 73102).